The primary structure comprises 149 residues: Pleckstrin homology domain-containing family J member 1 (149 aa).

Residues 15 to 108 (PAEMAAELGM…WMAALRQASY (94 aa)) enclose the PH domain.

The sequence is that of Pleckstrin homology domain-containing family J member 1 (PLEKHJ1) from Bos taurus (Bovine).